The chain runs to 378 residues: Cytochrome b (378 aa).

The next 4 helical transmembrane spans lie at 34 to 54 (FGSL…FLSM), 78 to 100 (WLLR…CHIG), 113 to 133 (TWNV…VGYV), and 179 to 199 (FFSF…VHLL). Positions 84 and 98 each coordinate heme b. 2 residues coordinate heme b: His183 and His197. His202 provides a ligand contact to a ubiquinone. 4 consecutive transmembrane segments (helical) span residues 225–245 (YSTK…IVVL), 289–306 (LGGV…FCLP), 313–342 (KFRS…WIGM), and 350–369 (IFIG…LNPL).

This sequence belongs to the cytochrome b family. In terms of assembly, the main subunits of complex b-c1 are: cytochrome b, cytochrome c1 and the Rieske protein. The cofactor is heme b.

It is found in the mitochondrion inner membrane. Component of the ubiquinol-cytochrome c reductase complex (complex III or cytochrome b-c1 complex) that is part of the mitochondrial respiratory chain. The b-c1 complex mediates electron transfer from ubiquinol to cytochrome c. Contributes to the generation of a proton gradient across the mitochondrial membrane that is then used for ATP synthesis. This chain is Cytochrome b (mt:Cyt-b), found in Loxocorone allax (Goblet worm).